The following is a 458-amino-acid chain: Argininosuccinate lyase (458 aa).

This sequence belongs to the lyase 1 family. Argininosuccinate lyase subfamily.

It is found in the cytoplasm. The enzyme catalyses 2-(N(omega)-L-arginino)succinate = fumarate + L-arginine. It functions in the pathway amino-acid biosynthesis; L-arginine biosynthesis; L-arginine from L-ornithine and carbamoyl phosphate: step 3/3. The sequence is that of Argininosuccinate lyase from Pseudoalteromonas atlantica (strain T6c / ATCC BAA-1087).